A 622-amino-acid chain; its full sequence is MALLQISEPGMAPAPHQRRLAVGIDLGTTNSLVAAVRNSVPEVLPDEAGRALLPSVVRYLEKGGRRIGHEAKEQAATDPRNTIVSVKRFMGRGKAEVEGAANAPYEFVDAPGMVQIRTIDGVKSPVEVSAEILATLRYRAEDTLGDELVGAVITVPAYFDDAQRQATKDAARLAGLNVLRLLNEPTAAAIAYGLDNAAEGLYAVYDLGGGTFDLSILKLTKGVFEVLAAGGDSALGGDDFDHVLFGHVLAQAGIDAKALAPEDVRLLLDRVRVLKEALSSAPQASLDVTLSNGARLVQTISHDTFASLVEPLVQRTLTPTRKALRDAQVTPADIKGVVLVGGATRMPVIRDAVAKYFGQPPLVNLDPDQVVALGAAIQADLLAGNRGSGDDWLLLDVIPLSLGVETMGGLVEKIIPRNSTIPIARAQEFTTFKDGQTAMAIHVVQGERELVADCRSLARFELRGIPPMTAGAARIRVTYQVDADGLLSVFAREQHSGVEASVVVKPSYGLADDDIAKMLEDSFKTAEIDMRARALREAQVEAQRMIEATQAALSADGELLDDAERTQVDALVAALRTIAQGDDADAIETATKALADGTDEFAARRMDKSIKRALSGRRLDEI.

This sequence belongs to the heat shock protein 70 family.

In terms of biological role, chaperone involved in the maturation of iron-sulfur cluster-containing proteins. Has a low intrinsic ATPase activity which is markedly stimulated by HscB. This Burkholderia ambifaria (strain MC40-6) protein is Chaperone protein HscA homolog.